Consider the following 139-residue polypeptide: D-ribose pyranase (139 aa).

His-20 functions as the Proton donor in the catalytic mechanism. Substrate-binding positions include Asp-28, His-106, and 128–130; that span reads YAN.

It belongs to the RbsD / FucU family. RbsD subfamily. Homodecamer.

The protein localises to the cytoplasm. The enzyme catalyses beta-D-ribopyranose = beta-D-ribofuranose. It functions in the pathway carbohydrate metabolism; D-ribose degradation; D-ribose 5-phosphate from beta-D-ribopyranose: step 1/2. Functionally, catalyzes the interconversion of beta-pyran and beta-furan forms of D-ribose. The protein is D-ribose pyranase of Aeromonas salmonicida (strain A449).